We begin with the raw amino-acid sequence, 229 residues long: MTSEMESSLEVSFSSSCAVSGASGCLPPARSRIFKIIVIGDSNVGKTCLTYRFCAGRFPDRTEATIGVDFRERAVDIDGERIKIQLWDTAGQERFRKSMVQHYYRNVHAVVFVYDMTNMASFHSLPAWIEECKQHLLANDIPRILVGNKCDLRSAIQVPTDLAQKFADTHSMPLFETSAKNPNDNDHVEAIFMTLAHKLKSHKPLMLSQLPDNRISLKPETKPAVTCWC.

GTP-binding residues include Asn-43, Val-44, Gly-45, Lys-46, Thr-47, Cys-48, Thr-62, and Thr-65. Thr-47 is a Mg(2+) binding site. The short motif at 56–68 (GRFPDRTEATIGV) is the Switch 1 element. Mg(2+) is bound by residues Thr-65 and Asp-88. Positions 89 to 108 (TAGQERFRKSMVQHYYRNVH) match the Switch 2 motif. Residues Gly-91, Asn-148, Lys-149, Asp-151, Ala-179, and Lys-180 each contribute to the GTP site. 2 S-geranylgeranyl cysteine lipidation sites follow: Cys-227 and Cys-229. Cys-229 is modified (cysteine methyl ester).

This sequence belongs to the small GTPase superfamily. Rab family. In terms of assembly, interacts (GTP- and GDP-bound forms) with ATG16L1; the complex consists of a tetramer where two RAB33B molecules bind independently one molecule of the ATG16L1 homodimer; the interaction promotes ATG12-ATG5-ATG16L1 complex recruitment to phagophores. Interacts with ATG16L2; however interaction is approximately hundred times lower than for ATG16L1. Interacts with RIC1 (via C-terminus domain); the interaction is direct with a preference for RAB33B-GTP. Interacts with RGP1. Mg(2+) is required as a cofactor. Post-translationally, prenylated. In terms of tissue distribution, ubiquitous.

It localises to the golgi apparatus membrane. The protein localises to the golgi apparatus. Its subcellular location is the cis-Golgi network. The protein resides in the preautophagosomal structure membrane. It catalyses the reaction GTP + H2O = GDP + phosphate + H(+). Its activity is regulated as follows. Regulated by guanine nucleotide exchange factors (GEFs) which promote the exchange of bound GDP for free GTP. Regulated by GTPase activating proteins (GAPs) such as SGSM2 which increase the GTP hydrolysis activity. Inhibited by GDP dissociation inhibitors (GDIs). Functionally, the small GTPases Rab are key regulators of intracellular membrane trafficking, from the formation of transport vesicles to their fusion with membranes. Rabs cycle between an inactive GDP-bound form and an active GTP-bound form that is able to recruit to membranes different sets of downstream effectors directly responsible for vesicle formation, movement, tethering and fusion. RAB33B acts, in coordination with RAB6A, to regulate intra-Golgi retrograde trafficking. Participates in autophagosome formation by recruiting the ATG12-ATG5-ATG16L1 complex to phagophores, probably in a nucleotide-independent manner. The chain is Ras-related protein Rab-33B from Mus musculus (Mouse).